Consider the following 124-residue polypeptide: Large ribosomal subunit protein bL12 (124 aa).

The protein belongs to the bacterial ribosomal protein bL12 family. In terms of assembly, homodimer. Part of the ribosomal stalk of the 50S ribosomal subunit. Forms a multimeric L10(L12)X complex, where L10 forms an elongated spine to which 2 to 4 L12 dimers bind in a sequential fashion. Binds GTP-bound translation factors.

In terms of biological role, forms part of the ribosomal stalk which helps the ribosome interact with GTP-bound translation factors. Is thus essential for accurate translation. The chain is Large ribosomal subunit protein bL12 from Azobacteroides pseudotrichonymphae genomovar. CFP2.